Here is a 307-residue protein sequence, read N- to C-terminus: Porphobilinogen deaminase (307 aa).

Cys-239 is subject to S-(dipyrrolylmethanemethyl)cysteine.

Belongs to the HMBS family. As to quaternary structure, monomer. It depends on dipyrromethane as a cofactor.

It catalyses the reaction 4 porphobilinogen + H2O = hydroxymethylbilane + 4 NH4(+). The protein operates within porphyrin-containing compound metabolism; protoporphyrin-IX biosynthesis; coproporphyrinogen-III from 5-aminolevulinate: step 2/4. Functionally, tetrapolymerization of the monopyrrole PBG into the hydroxymethylbilane pre-uroporphyrinogen in several discrete steps. This Campylobacter jejuni subsp. doylei (strain ATCC BAA-1458 / RM4099 / 269.97) protein is Porphobilinogen deaminase.